Reading from the N-terminus, the 208-residue chain is Ribosomal RNA small subunit methyltransferase G (208 aa).

S-adenosyl-L-methionine-binding positions include G77, L82, 128-129 (VE), and R142.

It belongs to the methyltransferase superfamily. RNA methyltransferase RsmG family.

Its subcellular location is the cytoplasm. The enzyme catalyses guanosine(527) in 16S rRNA + S-adenosyl-L-methionine = N(7)-methylguanosine(527) in 16S rRNA + S-adenosyl-L-homocysteine. Specifically methylates the N7 position of guanine in position 527 of 16S rRNA. The protein is Ribosomal RNA small subunit methyltransferase G of Chromohalobacter salexigens (strain ATCC BAA-138 / DSM 3043 / CIP 106854 / NCIMB 13768 / 1H11).